The chain runs to 208 residues: High frequency lysogenization protein HflD homolog (208 aa).

Belongs to the HflD family.

It is found in the cytoplasm. It localises to the cell inner membrane. The chain is High frequency lysogenization protein HflD homolog from Edwardsiella ictaluri (strain 93-146).